The sequence spans 88 residues: Large ribosomal subunit protein bL31B (88 aa).

It belongs to the bacterial ribosomal protein bL31 family. Type B subfamily. As to quaternary structure, part of the 50S ribosomal subunit.

The sequence is that of Large ribosomal subunit protein bL31B from Corynebacterium glutamicum (strain R).